The primary structure comprises 98 residues: mRNA interferase toxin MqsR (98 aa).

Might be a dimer. Also reported to be a monomer. Crystallizes as a heterotetramer with MqsA, MqsR-MqsA(2)-MqsR. Purifies as a possible heterohexamer of 2 MqsR dimers and 1 MqsA dimer. When the 2 dissociate the MsqR mRNA interferase becomes active.

In terms of biological role, toxic component of a type II toxin-antitoxin (TA) system. Plays a significant role in the control of biofilm formation and induction of persister cells in the presence of antibiotics. An mRNA interferase which has been reported to be translation-independent. It has also been reported to be translation-dependent. Cleavage has been reported to occur on either side of G in the sequence GCU. Also reported to cleave after C in GC(A/U) sequences. There are only 14 genes in E.coli W3110 (and probably also MG1655) that do not have a GCU sequence and thus are resistant to the mRNA interferase activity; among these is the gene for toxin GhoT. Overexpression of MqsR causes cessation of cell growth and inhibits cell proliferation via inhibition of translation as well as increasing persister cell formation; these effects are overcome by concomitant or subsequent expression of antitoxin MqsA. Cross-talk can occur between different TA systems. Ectopic expression of this toxin induces transcription of the relBEF TA system operon with specific cleavage of the relBEF mRNA produced. Regulates the expression of GhoT/GhoS, a type V TA system. Persistence depends on toxin GhoT activity, which MqsR controls at the post-transcriptional level by selectively degrading the antitoxin ghoS segment of the ghoST mRNA. Overexpression leads to a dramatic increase in tolerance to the antibiotic ofloxacin. This TA system mediates cell growth during bile acid deoxycholate stress by degrading mRNA for probable deoxycholate-binding protein YgiS; bile acid detergents such as deoxycholate are important for host defense against bacterial growth in the gall bladder and duodenum. Functionally, initially reported to act as a cotranscription factor with MqsA. Following further experiments, the MqsR-MqsA complex does not bind DNA and all reported data are actually due to a small fraction of free MqsA alone binding DNA. Addition of MqsR to a preformed MqsA-promoter DNA complex causes dissociation of the MqsA-DNA complex, probably causing derepression of MqsA-repressed transcripts. Does not bind DNA in the presence or absence of MqsA. This is mRNA interferase toxin MqsR from Escherichia coli (strain K12).